The sequence spans 342 residues: MLTERQLIILQVIIDDFIETAHPIGSRALSKSEYLPYSAATIRNEMADLEDLGFLEKTHTSSGRIPSEKGYRYYVDHLIGPMNQHEAGILRKYTDGEFFEFEQVVQMTAEVLSELTNYTSIILGPEMFEATLKQIQVLTLSDHTAVAILVTSTGHVEHRSFALPEGIASSDLEKLVNILNDRLKGVPIIRLGEVISTEVAQLMHRYMDDFEASFDLLRAFFMNEHPVKLYFGGKSNILMQPEFNDVDKIRSFYALIEQEDEIANLLKNTHQGIKVSIGNENKVEAIKDLSLITASYHVGDNLMGTIALLGPTRMEYKKVISLMKGISDEMTNTLDRWYKGDS.

Belongs to the HrcA family.

Negative regulator of class I heat shock genes (grpE-dnaK-dnaJ and groELS operons). Prevents heat-shock induction of these operons. This chain is Heat-inducible transcription repressor HrcA, found in Oceanobacillus iheyensis (strain DSM 14371 / CIP 107618 / JCM 11309 / KCTC 3954 / HTE831).